The chain runs to 77 residues: Acyl carrier protein (77 aa).

In terms of domain architecture, Carrier spans 1 to 76 (MAVFEDVRDV…DVVNYIEKLG (76 aa)). Ser36 carries the post-translational modification O-(pantetheine 4'-phosphoryl)serine.

It belongs to the acyl carrier protein (ACP) family. 4'-phosphopantetheine is transferred from CoA to a specific serine of apo-ACP by AcpS. This modification is essential for activity because fatty acids are bound in thioester linkage to the sulfhydryl of the prosthetic group.

It is found in the cytoplasm. The protein operates within lipid metabolism; fatty acid biosynthesis. Carrier of the growing fatty acid chain in fatty acid biosynthesis. The protein is Acyl carrier protein of Campylobacter concisus (strain 13826).